The chain runs to 636 residues: Eukaryotic peptide chain release factor GTP-binding subunit ERF3A (636 aa).

2 stretches are compositionally biased toward gly residues: residues 1-16 and 103-116; these read MDPS…GGGS and AAGG…GAGG. 2 disordered regions span residues 1 to 54 and 90 to 206; these read MDPS…AAVA and LRGP…PPGA. Polar residues predominate over residues 121 to 138; the sequence is VESSQDQSCEGSNSTVSM. Residues 183–193 show a composition bias toward acidic residues; sequence STQEMMEEEEE. Positions 209–435 constitute a tr-type G domain; the sequence is KEHVNVVFIG…DNLPNFNRSV (227 aa). Residues 218–225 are G1; it reads GHVDAGKS. A GTP-binding site is contributed by 221-226; the sequence is DAGKST. Positions 274-278 are G2; it reads GKTVE. A G3 region spans residues 295–298; that stretch reads DAPG. Residues 357 to 360 and 399 to 401 contribute to the GTP site; these read NKMD and SGL. Residues 357–360 are G4; it reads NKMD. The segment at 399-401 is G5; that stretch reads SGL.

The protein belongs to the TRAFAC class translation factor GTPase superfamily. Classic translation factor GTPase family. ERF3 subfamily. Component of the eRF1-eRF3-GTP ternary complex, composed of ETF1/ERF1 and ERF3 (GSPT1/ERF3A or GSPT2/ERF3B) and GTP. Component of the transient SURF (SMG1-UPF1-eRF1-eRF3) complex. The ETF1-GSPT1 complex interacts with JMJD4. Interacts with PABPC1. Interacts with SHFL.

The enzyme catalyses GTP + H2O = GDP + phosphate + H(+). Functionally, GTPase component of the eRF1-eRF3-GTP ternary complex, a ternary complex that mediates translation termination in response to the termination codons UAA, UAG and UGA. GSPT1/ERF3A mediates ETF1/ERF1 delivery to stop codons: The eRF1-eRF3-GTP complex binds to a stop codon in the ribosomal A-site. GTP hydrolysis by GSPT1/ERF3A induces a conformational change that leads to its dissociation, permitting ETF1/ERF1 to accommodate fully in the A-site. Component of the transient SURF complex which recruits UPF1 to stalled ribosomes in the context of nonsense-mediated decay (NMD) of mRNAs containing premature stop codons. Required for SHFL-mediated translation termination which inhibits programmed ribosomal frameshifting (-1PRF) of mRNA from viruses and cellular genes. This is Eukaryotic peptide chain release factor GTP-binding subunit ERF3A (Gspt1) from Mus musculus (Mouse).